The sequence spans 347 residues: Histone deacetylase 11 (347 aa).

The segment at 14 to 318 (TRWPIVYSPR…ARIIADSILN (305 aa)) is histone deacetylase. Residue His143 is part of the active site.

It belongs to the histone deacetylase family. As to quaternary structure, interacts with HDAC6.

The protein localises to the nucleus. It carries out the reaction N(6)-acetyl-L-lysyl-[histone] + H2O = L-lysyl-[histone] + acetate. Responsible for the deacetylation of lysine residues on the N-terminal part of the core histones (H2A, H2B, H3 and H4). Histone deacetylation gives a tag for epigenetic repression and plays an important role in transcriptional regulation, cell cycle progression and developmental events. Histone deacetylases act via the formation of large multiprotein complexes. The polypeptide is Histone deacetylase 11 (HDAC11) (Macaca fascicularis (Crab-eating macaque)).